Consider the following 92-residue polypeptide: Small ribosomal subunit protein bS18c (92 aa).

The protein belongs to the bacterial ribosomal protein bS18 family. In terms of assembly, part of the 30S ribosomal subunit.

The protein resides in the plastid. The polypeptide is Small ribosomal subunit protein bS18c (rps18) (Epifagus virginiana (Beechdrops)).